The sequence spans 346 residues: GTPase Obg (346 aa).

One can recognise an Obg domain in the interval 1–159 (MRFVDRCRLK…RELRLELKVL (159 aa)). The interval 122-147 (KGGRGNLHFKSPHDRAPRRAEPGEPG) is disordered. Residues 132–147 (SPHDRAPRRAEPGEPG) are compositionally biased toward basic and acidic residues. The OBG-type G domain occupies 160 to 336 (ADVGLLGFPN…LVRELAALAR (177 aa)). Residues 166-173 (GFPNAGKS), 191-195 (FTTLT), 218-221 (DIPG), 288-291 (TKAD), and 317-319 (SAA) contribute to the GTP site. S173 and T193 together coordinate Mg(2+).

The protein belongs to the TRAFAC class OBG-HflX-like GTPase superfamily. OBG GTPase family. As to quaternary structure, monomer. The cofactor is Mg(2+).

It localises to the cytoplasm. An essential GTPase which binds GTP, GDP and possibly (p)ppGpp with moderate affinity, with high nucleotide exchange rates and a fairly low GTP hydrolysis rate. Plays a role in control of the cell cycle, stress response, ribosome biogenesis and in those bacteria that undergo differentiation, in morphogenesis control. In Sorangium cellulosum (strain So ce56) (Polyangium cellulosum (strain So ce56)), this protein is GTPase Obg.